A 395-amino-acid chain; its full sequence is NADH-quinone oxidoreductase subunit D (395 aa).

This sequence belongs to the complex I 49 kDa subunit family. In terms of assembly, NDH-1 is composed of 14 different subunits. Subunits NuoB, C, D, E, F, and G constitute the peripheral sector of the complex.

The protein localises to the cell inner membrane. The enzyme catalyses a quinone + NADH + 5 H(+)(in) = a quinol + NAD(+) + 4 H(+)(out). Functionally, NDH-1 shuttles electrons from NADH, via FMN and iron-sulfur (Fe-S) centers, to quinones in the respiratory chain. The immediate electron acceptor for the enzyme in this species is believed to be a menaquinone. Couples the redox reaction to proton translocation (for every two electrons transferred, four hydrogen ions are translocated across the cytoplasmic membrane), and thus conserves the redox energy in a proton gradient. This is NADH-quinone oxidoreductase subunit D from Chlorobium luteolum (strain DSM 273 / BCRC 81028 / 2530) (Pelodictyon luteolum).